We begin with the raw amino-acid sequence, 409 residues long: Tryptophan synthase beta chain (409 aa).

Lysine 95 carries the post-translational modification N6-(pyridoxal phosphate)lysine.

Belongs to the TrpB family. As to quaternary structure, tetramer of two alpha and two beta chains. The cofactor is pyridoxal 5'-phosphate.

It carries out the reaction (1S,2R)-1-C-(indol-3-yl)glycerol 3-phosphate + L-serine = D-glyceraldehyde 3-phosphate + L-tryptophan + H2O. It participates in amino-acid biosynthesis; L-tryptophan biosynthesis; L-tryptophan from chorismate: step 5/5. Its function is as follows. The beta subunit is responsible for the synthesis of L-tryptophan from indole and L-serine. In Pseudomonas syringae pv. syringae (strain B728a), this protein is Tryptophan synthase beta chain.